Here is a 120-residue protein sequence, read N- to C-terminus: Ribosome-binding factor A (120 aa).

It belongs to the RbfA family. As to quaternary structure, monomer. Binds 30S ribosomal subunits, but not 50S ribosomal subunits or 70S ribosomes.

It is found in the cytoplasm. Its function is as follows. One of several proteins that assist in the late maturation steps of the functional core of the 30S ribosomal subunit. Associates with free 30S ribosomal subunits (but not with 30S subunits that are part of 70S ribosomes or polysomes). Required for efficient processing of 16S rRNA. May interact with the 5'-terminal helix region of 16S rRNA. This Chlamydia caviae (strain ATCC VR-813 / DSM 19441 / 03DC25 / GPIC) (Chlamydophila caviae) protein is Ribosome-binding factor A.